The following is a 214-amino-acid chain: Guanylate kinase (214 aa).

Residues 6-192 (GTLYIISAPS…ALEDLKAIFR (187 aa)) form the Guanylate kinase-like domain. 13–20 (APSGAGKT) provides a ligand contact to ATP.

The protein belongs to the guanylate kinase family.

The protein localises to the cytoplasm. The enzyme catalyses GMP + ATP = GDP + ADP. In terms of biological role, essential for recycling GMP and indirectly, cGMP. The polypeptide is Guanylate kinase (Pseudomonas savastanoi pv. phaseolicola (strain 1448A / Race 6) (Pseudomonas syringae pv. phaseolicola (strain 1448A / Race 6))).